The primary structure comprises 251 residues: Pyrroloquinoline-quinone synthase (251 aa).

The protein belongs to the PqqC family.

The catalysed reaction is 6-(2-amino-2-carboxyethyl)-7,8-dioxo-1,2,3,4,7,8-hexahydroquinoline-2,4-dicarboxylate + 3 O2 = pyrroloquinoline quinone + 2 H2O2 + 2 H2O + H(+). It functions in the pathway cofactor biosynthesis; pyrroloquinoline quinone biosynthesis. Its function is as follows. Ring cyclization and eight-electron oxidation of 3a-(2-amino-2-carboxyethyl)-4,5-dioxo-4,5,6,7,8,9-hexahydroquinoline-7,9-dicarboxylic-acid to PQQ. This Pseudomonas savastanoi pv. phaseolicola (strain 1448A / Race 6) (Pseudomonas syringae pv. phaseolicola (strain 1448A / Race 6)) protein is Pyrroloquinoline-quinone synthase.